The sequence spans 308 residues: Aspartate carbamoyltransferase catalytic subunit (308 aa).

Residues arginine 57 and threonine 58 each contribute to the carbamoyl phosphate site. Lysine 86 contacts L-aspartate. Carbamoyl phosphate contacts are provided by arginine 107, histidine 135, and glutamine 138. The L-aspartate site is built by arginine 168 and arginine 229. Leucine 268 and proline 269 together coordinate carbamoyl phosphate.

Belongs to the aspartate/ornithine carbamoyltransferase superfamily. ATCase family. In terms of assembly, heterooligomer of catalytic and regulatory chains.

The catalysed reaction is carbamoyl phosphate + L-aspartate = N-carbamoyl-L-aspartate + phosphate + H(+). It functions in the pathway pyrimidine metabolism; UMP biosynthesis via de novo pathway; (S)-dihydroorotate from bicarbonate: step 2/3. In terms of biological role, catalyzes the condensation of carbamoyl phosphate and aspartate to form carbamoyl aspartate and inorganic phosphate, the committed step in the de novo pyrimidine nucleotide biosynthesis pathway. The protein is Aspartate carbamoyltransferase catalytic subunit of Pyrococcus furiosus (strain ATCC 43587 / DSM 3638 / JCM 8422 / Vc1).